The sequence spans 513 residues: Proline-rich receptor-like protein kinase PERK3 (513 aa).

The Extracellular segment spans residues Met1–Thr123. Asn11 is a glycosylation site (N-linked (GlcNAc...) asparagine). Polar residues predominate over residues Leu27–Met36. The disordered stretch occupies residues Leu27 to Ser119. The N-linked (GlcNAc...) asparagine glycan is linked to Asn66. Residues Pro78 to Arg89 are compositionally biased toward low complexity. Over residues Gly99–Phe111 the composition is skewed to polar residues. Residues Gly124–Leu144 form a helical membrane-spanning segment. Residues Cys145–Leu513 lie on the Cytoplasmic side of the membrane. A Phosphothreonine modification is found at Thr172. The Protein kinase domain occupies Phe183–Asp334. Residues Leu189–Val197 and Lys211 contribute to the ATP site. Phosphotyrosine is present on Tyr256. Asp307 acts as the Proton acceptor in catalysis. At Ser340 the chain carries Phosphoserine. Phosphothreonine occurs at positions 341 and 346. Tyr354 is subject to Phosphotyrosine.

It belongs to the protein kinase superfamily. Ser/Thr protein kinase family. Expressed at low levels in inflorescence bolt, flower buds, siliques, roots, seedlings and leaves.

It localises to the cell membrane. The enzyme catalyses L-seryl-[protein] + ATP = O-phospho-L-seryl-[protein] + ADP + H(+). It catalyses the reaction L-threonyl-[protein] + ATP = O-phospho-L-threonyl-[protein] + ADP + H(+). This is Proline-rich receptor-like protein kinase PERK3 (PERK3) from Arabidopsis thaliana (Mouse-ear cress).